The following is a 117-amino-acid chain: Large ribosomal subunit protein bL20 (117 aa).

The protein belongs to the bacterial ribosomal protein bL20 family.

In terms of biological role, binds directly to 23S ribosomal RNA and is necessary for the in vitro assembly process of the 50S ribosomal subunit. It is not involved in the protein synthesizing functions of that subunit. The protein is Large ribosomal subunit protein bL20 of Finegoldia magna (strain ATCC 29328 / DSM 20472 / WAL 2508) (Peptostreptococcus magnus).